Consider the following 179-residue polypeptide: MYWGGSLADNKSLRINGSIRVREVRLVDAVGQQCGVVPTPEALRMARDINLDLVEVAPQASPPVCKILDYGKYRFEMGKKLRDSKKRQRLQTLKEVRMQPKINDHDMAFKAKHIQRFLDEGDKVKVTIRFRGRELAHTDLGFNVLQNVLGRLVCGYSVEKQAAMEGRSMSMTLTPKSKK.

Belongs to the IF-3 family. Monomer.

It localises to the cytoplasm. Functionally, IF-3 binds to the 30S ribosomal subunit and shifts the equilibrium between 70S ribosomes and their 50S and 30S subunits in favor of the free subunits, thus enhancing the availability of 30S subunits on which protein synthesis initiation begins. This Treponema pallidum (strain Nichols) protein is Translation initiation factor IF-3.